The following is a 326-amino-acid chain: tRNA-modifying protein YgfZ (326 aa).

Positions 27 and 189 each coordinate folate.

The protein belongs to the tRNA-modifying YgfZ family.

The protein resides in the cytoplasm. Folate-binding protein involved in regulating the level of ATP-DnaA and in the modification of some tRNAs. It is probably a key factor in regulatory networks that act via tRNA modification, such as initiation of chromosomal replication. The sequence is that of tRNA-modifying protein YgfZ from Escherichia coli O6:H1 (strain CFT073 / ATCC 700928 / UPEC).